We begin with the raw amino-acid sequence, 354 residues long: Guanine nucleotide-binding protein alpha-16 subunit (354 aa).

G2 carries the N-myristoyl glycine lipid modification. Residue C3 is the site of S-palmitoyl cysteine attachment. One can recognise a G-alpha domain in the interval 31–354 (KTVKLLLLGA…RDNLRTCGLY (324 aa)). The tract at residues 34-47 (KLLLLGAGESGKST) is G1 motif. Residues 39–46 (GAGESGKS), 174–180 (LRTRIKT), 199–203 (DVGGQ), 268–271 (NKKD), and A326 contribute to the GTP site. Mg(2+)-binding residues include S46 and T180. The segment at 172–180 (DVLRTRIKT) is G2 motif. The tract at residues 195-204 (FVVFDVGGQR) is G3 motif. The interval 264–271 (ILFLNKKD) is G4 motif. Residues 324-329 (TCATDT) form a G5 motif region.

The protein belongs to the G-alpha family. As to quaternary structure, g proteins are composed of 3 units; alpha, beta and gamma. The alpha chain contains the guanine nucleotide binding site.

Functionally, guanine nucleotide-binding proteins (G proteins) are involved as modulators or transducers in various transmembrane signaling systems. In the 1-cell embryo, probably together with goa-1, controls nuclear rotation and spindle elongation during mitosis. During the first embryonic cell divisons, plays a role in gpr-1/2 cortical localization and in the proper orientation of EMS blastomere mitotic spindle. The polypeptide is Guanine nucleotide-binding protein alpha-16 subunit (gpa-16) (Caenorhabditis briggsae).